A 280-amino-acid polypeptide reads, in one-letter code: Phosphatidylserine decarboxylase proenzyme (280 aa).

Active-site charge relay system; for autoendoproteolytic cleavage activity residues include Asp-90, His-146, and Ser-247. Ser-247 acts as the Schiff-base intermediate with substrate; via pyruvic acid; for decarboxylase activity in catalysis. Ser-247 bears the Pyruvic acid (Ser); by autocatalysis mark.

The protein belongs to the phosphatidylserine decarboxylase family. PSD-B subfamily. Prokaryotic type I sub-subfamily. Heterodimer of a large membrane-associated beta subunit and a small pyruvoyl-containing alpha subunit. It depends on pyruvate as a cofactor. In terms of processing, is synthesized initially as an inactive proenzyme. Formation of the active enzyme involves a self-maturation process in which the active site pyruvoyl group is generated from an internal serine residue via an autocatalytic post-translational modification. Two non-identical subunits are generated from the proenzyme in this reaction, and the pyruvate is formed at the N-terminus of the alpha chain, which is derived from the carboxyl end of the proenzyme. The autoendoproteolytic cleavage occurs by a canonical serine protease mechanism, in which the side chain hydroxyl group of the serine supplies its oxygen atom to form the C-terminus of the beta chain, while the remainder of the serine residue undergoes an oxidative deamination to produce ammonia and the pyruvoyl prosthetic group on the alpha chain. During this reaction, the Ser that is part of the protease active site of the proenzyme becomes the pyruvoyl prosthetic group, which constitutes an essential element of the active site of the mature decarboxylase.

It localises to the cell membrane. It carries out the reaction a 1,2-diacyl-sn-glycero-3-phospho-L-serine + H(+) = a 1,2-diacyl-sn-glycero-3-phosphoethanolamine + CO2. The protein operates within phospholipid metabolism; phosphatidylethanolamine biosynthesis; phosphatidylethanolamine from CDP-diacylglycerol: step 2/2. Catalyzes the formation of phosphatidylethanolamine (PtdEtn) from phosphatidylserine (PtdSer). The sequence is that of Phosphatidylserine decarboxylase proenzyme from Myxococcus xanthus (strain DK1622).